The chain runs to 351 residues: N-acetyl-gamma-glutamyl-phosphate reductase (351 aa).

Residue cysteine 154 is part of the active site.

It belongs to the NAGSA dehydrogenase family. Type 1 subfamily.

It is found in the cytoplasm. It carries out the reaction N-acetyl-L-glutamate 5-semialdehyde + phosphate + NADP(+) = N-acetyl-L-glutamyl 5-phosphate + NADPH + H(+). The protein operates within amino-acid biosynthesis; L-arginine biosynthesis; N(2)-acetyl-L-ornithine from L-glutamate: step 3/4. Its function is as follows. Catalyzes the NADPH-dependent reduction of N-acetyl-5-glutamyl phosphate to yield N-acetyl-L-glutamate 5-semialdehyde. The polypeptide is N-acetyl-gamma-glutamyl-phosphate reductase (Prochlorococcus marinus (strain MIT 9312)).